The chain runs to 83 residues: Normal mucosa of esophagus-specific gene 1 protein (83 aa).

It belongs to the complex I NDUFA4 subunit family. As to expression, expressed mainly in stomach, placenta, small intestine and colon, as well as in normal mucosa of esophagus. Down-regulated in esophageal squamous cell carcinoma.

It is found in the nucleus. The chain is Normal mucosa of esophagus-specific gene 1 protein (NMES1) from Homo sapiens (Human).